Reading from the N-terminus, the 197-residue chain is 5'-deoxynucleotidase plu3092 (197 aa).

Substrate-binding positions include 16–17 (RW) and histidine 31. The region spanning 28 to 140 (VSEHSLQVAF…IKQADSLCAY (113 aa)) is the HD domain. A divalent metal cation is bound by residues histidine 31, histidine 66, and aspartate 67. Substrate is bound by residues aspartate 67, 75–78 (DLPT), and aspartate 135. Residue aspartate 135 participates in a divalent metal cation binding.

This sequence belongs to the 5DNU family. In terms of assembly, homodimer. It depends on a divalent metal cation as a cofactor.

The protein resides in the cytoplasm. The catalysed reaction is a 2'-deoxyribonucleoside 5'-phosphate + H2O = a 2'-deoxyribonucleoside + phosphate. Its function is as follows. Catalyzes the strictly specific dephosphorylation of 2'-deoxyribonucleoside 5'-monophosphates. In Photorhabdus laumondii subsp. laumondii (strain DSM 15139 / CIP 105565 / TT01) (Photorhabdus luminescens subsp. laumondii), this protein is 5'-deoxynucleotidase plu3092.